We begin with the raw amino-acid sequence, 245 residues long: Uracil-DNA glycosylase (245 aa).

D82 functions as the Proton acceptor in the catalytic mechanism.

It belongs to the uracil-DNA glycosylase (UDG) superfamily. UNG family.

It localises to the cytoplasm. It carries out the reaction Hydrolyzes single-stranded DNA or mismatched double-stranded DNA and polynucleotides, releasing free uracil.. Excises uracil residues from the DNA which can arise as a result of misincorporation of dUMP residues by DNA polymerase or due to deamination of cytosine. The sequence is that of Uracil-DNA glycosylase from Deinococcus geothermalis (strain DSM 11300 / CIP 105573 / AG-3a).